Consider the following 154-residue polypeptide: tRNA-splicing endonuclease (154 aa).

Active-site residues include Tyr86, His102, and Lys133.

This sequence belongs to the tRNA-intron endonuclease family. Archaeal short subfamily. Homotetramer; although the tetramer contains four active sites, only two participate in the cleavage. Therefore, it should be considered as a dimer of dimers.

The catalysed reaction is pretRNA = a 3'-half-tRNA molecule with a 5'-OH end + a 5'-half-tRNA molecule with a 2',3'-cyclic phosphate end + an intron with a 2',3'-cyclic phosphate and a 5'-hydroxyl terminus.. Functionally, endonuclease that removes tRNA introns. Cleaves pre-tRNA at the 5'- and 3'-splice sites to release the intron. The products are an intron and two tRNA half-molecules bearing 2',3' cyclic phosphate and 5'-OH termini. Recognizes a pseudosymmetric substrate in which 2 bulged loops of 3 bases are separated by a stem of 4 bp. The chain is tRNA-splicing endonuclease from Nanoarchaeum equitans (strain Kin4-M).